The chain runs to 181 residues: Acireductone dioxygenase (181 aa).

Fe(2+) is bound by residues H91, H93, E97, and H136. Ni(2+)-binding residues include H91, H93, E97, and H136.

Belongs to the acireductone dioxygenase (ARD) family. In terms of assembly, monomer. Interacts with MMP14. The cofactor is Fe(2+). Ni(2+) is required as a cofactor.

It localises to the cytoplasm. Its subcellular location is the nucleus. The protein localises to the cell membrane. It carries out the reaction 1,2-dihydroxy-5-(methylsulfanyl)pent-1-en-3-one + O2 = 4-methylsulfanyl-2-oxobutanoate + formate + 2 H(+). It catalyses the reaction 1,2-dihydroxy-5-(methylsulfanyl)pent-1-en-3-one + O2 = 3-(methylsulfanyl)propanoate + CO + formate + 2 H(+). It functions in the pathway amino-acid biosynthesis; L-methionine biosynthesis via salvage pathway; L-methionine from S-methyl-5-thio-alpha-D-ribose 1-phosphate: step 5/6. Its function is as follows. Catalyzes 2 different reactions between oxygen and the acireductone 1,2-dihydroxy-3-keto-5-methylthiopentene (DHK-MTPene) depending upon the metal bound in the active site. Fe-containing acireductone dioxygenase (Fe-ARD) produces formate and 2-keto-4-methylthiobutyrate (KMTB), the alpha-ketoacid precursor of methionine in the methionine recycle pathway. Ni-containing acireductone dioxygenase (Ni-ARD) produces methylthiopropionate, carbon monoxide and formate, and does not lie on the methionine recycle pathway. The polypeptide is Acireductone dioxygenase (adi1) (Danio rerio (Zebrafish)).